The chain runs to 2571 residues: Stabilin-1 (2571 aa).

The N-terminal stretch at methionine 1–glycine 25 is a signal peptide. Over glutamine 26–proline 2475 the chain is Extracellular. EGF-like domains lie at phenylalanine 111 to glutamine 149, phenylalanine 157 to aspartate 194, glutamate 196 to leucine 232, and alanine 233 to leucine 272. 12 disulfide bridges follow: cysteine 113-cysteine 127, cysteine 121-cysteine 137, cysteine 139-cysteine 148, cysteine 161-cysteine 172, cysteine 165-cysteine 182, cysteine 184-cysteine 193, cysteine 200-cysteine 211, cysteine 205-cysteine 218, cysteine 220-cysteine 231, cysteine 237-cysteine 248, cysteine 242-cysteine 258, and cysteine 260-cysteine 271. N-linked (GlcNAc...) asparagine glycosylation is found at asparagine 134 and asparagine 142. Asparagine 287, asparagine 313, asparagine 416, asparagine 607, asparagine 674, asparagine 713, and asparagine 746 each carry an N-linked (GlcNAc...) asparagine glycan. 2 consecutive FAS1 domains span residues tyrosine 357 to arginine 495 and lysine 507 to leucine 642. Residues aspartate 729–histidine 769 enclose the EGF-like 5 domain. 3 disulfide bridges follow: cysteine 733–cysteine 747, cysteine 741–cysteine 757, and cysteine 759–cysteine 768. Residue asparagine 817 is glycosylated (N-linked (GlcNAc...) asparagine). 4 EGF-like domains span residues serine 819 to serine 859, arginine 862 to valine 904, alanine 905 to serine 947, and proline 948 to serine 987. Intrachain disulfides connect cysteine 823/cysteine 838, cysteine 832/cysteine 847, cysteine 866/cysteine 880, cysteine 874/cysteine 890, cysteine 892/cysteine 903, cysteine 909/cysteine 923, cysteine 917/cysteine 933, cysteine 935/cysteine 946, cysteine 952/cysteine 965, and cysteine 959/cysteine 975. FAS1 domains lie at tyrosine 989 to leucine 1119 and glycine 1129 to leucine 1254. Residues asparagine 1011, asparagine 1088, asparagine 1097, asparagine 1171, asparagine 1179, asparagine 1223, and asparagine 1275 are each glycosylated (N-linked (GlcNAc...) asparagine). The Laminin EGF-like 1 domain maps to threonine 1328–glutamate 1393. 18 disulfide bridges follow: cysteine 1333–cysteine 1347, cysteine 1341–cysteine 1357, cysteine 1359–cysteine 1368, cysteine 1380–cysteine 1391, cysteine 1384–cysteine 1401, cysteine 1403–cysteine 1412, cysteine 1421–cysteine 1431, cysteine 1425–cysteine 1441, cysteine 1443–cysteine 1454, cysteine 1460–cysteine 1473, cysteine 1467–cysteine 1483, cysteine 1485–cysteine 1496, cysteine 1502–cysteine 1515, cysteine 1509–cysteine 1525, cysteine 1527–cysteine 1539, cysteine 1545–cysteine 1558, cysteine 1552–cysteine 1568, and cysteine 1570–cysteine 1582. Residue asparagine 1398 is glycosylated (N-linked (GlcNAc...) asparagine). EGF-like domains are found at residues threonine 1417–serine 1455, glutamate 1456–glutamine 1497, glutamate 1498–lysine 1540, and leucine 1541–histidine 1583. Residues asparagine 1450 and asparagine 1472 are each glycosylated (N-linked (GlcNAc...) asparagine). 2 consecutive FAS1 domains span residues histidine 1583 to leucine 1709 and proline 1725 to leucine 1865. N-linked (GlcNAc...) asparagine glycans are attached at residues asparagine 1627 and asparagine 1728. Residues isoleucine 1966–glutamate 2031 enclose the Laminin EGF-like 2 domain. Intrachain disulfides connect cysteine 1971–cysteine 1985, cysteine 1979–cysteine 1995, cysteine 1997–cysteine 2006, cysteine 2018–cysteine 2029, cysteine 2023–cysteine 2039, cysteine 2041–cysteine 2050, cysteine 2060–cysteine 2070, cysteine 2064–cysteine 2076, cysteine 2078–cysteine 2089, cysteine 2095–cysteine 2108, cysteine 2102–cysteine 2117, cysteine 2119–cysteine 2130, cysteine 2136–cysteine 2150, cysteine 2144–cysteine 2160, cysteine 2162–cysteine 2173, cysteine 2230–cysteine 2299, and cysteine 2254–cysteine 2275. 3 consecutive EGF-like domains span residues leucine 2056–threonine 2090, valine 2091–arginine 2131, and alanine 2132–leucine 2174. N-linked (GlcNAc...) asparagine glycosylation is present at asparagine 2107. A Link domain is found at glycine 2208–arginine 2301. N-linked (GlcNAc...) asparagine glycans are attached at residues asparagine 2261, asparagine 2290, asparagine 2334, asparagine 2347, asparagine 2379, asparagine 2393, asparagine 2400, and asparagine 2424. Positions asparagine 2322–leucine 2459 constitute an FAS1 7 domain. Residues valine 2476–alanine 2496 form a helical membrane-spanning segment. Over leucine 2497–lysine 2571 the chain is Cytoplasmic.

Interacts with CHID1.

The protein resides in the membrane. Functionally, acts as a scavenger receptor for acetylated low density lipoprotein. Binds to both Gram-positive and Gram-negative bacteria and may play a role in defense against bacterial infection. When inhibited in endothelial tube formation assays, there is a marked decrease in cell-cell interactions, suggesting a role in angiogenesis. Involved in the delivery of newly synthesized CHID1/SI-CLP from the biosynthetic compartment to the endosomal/lysosomal system. The protein is Stabilin-1 (Stab1) of Mus musculus (Mouse).